Reading from the N-terminus, the 1003-residue chain is Putative helicase MOV-10 (1003 aa).

An N6-acetyllysine modification is found at Lys-148. A phosphothreonine mark is found at Thr-160 and Thr-254. Ser-432 is subject to Phosphoserine. ATP is bound at residue 524–531; it reads GPPGTGKT. Residues 645-648 carry the DEAG box motif; that stretch reads DEAG. The interaction with AGO2 and APOBEC3G stretch occupies residues 921 to 965; it reads NPLLLGHDPDWKVFLEFCKENGGYTGCPFPAKLDLQQGQNLLQGL. The segment at 968–1003 is disordered; the sequence is LSPSTSGLKSHDYLPQEREGEEGLSLQVEPEWRNEL. 2 positions are modified to phosphoserine: Ser-969 and Ser-977. Basic and acidic residues predominate over residues 976 to 985; the sequence is KSHDYLPQER.

This sequence belongs to the DNA2/NAM7 helicase family. SDE3 subfamily. Interacts with DICER1, AGO2, TARBP2, EIF6 and RPL7A (60S ribosome subunit); they form a large RNA-induced silencing complex (RISC). Interacts with APOBEC3G in an RNA-dependent manner. Interacts with TRIM71 (via NHL repeats) in an RNA-dependent manner. Interacts with both protein products of LIRE1, ORF1p and ORF2p. Interacts with TUT4 and, to a lesser extent, TUT7; the interactions are RNA-dependent. Interacts with AGO2, TNRC6B and UPF1; the interactions are direct and RNA-dependent. Interacts with FMR1; this interaction is direct, occurs in an RNA-dependent manner on polysomes and induces association of MOV10 with RNAs. Interacts with SHFL; the interaction increases in presence of RNA. Interacts with DHX34; the interaction is-RNA independent. Interacts with RBM46. Post-translationally, ubiquitinated by the DCX(DCAF12) complex that specifically recognizes the glutamate-leucine (Glu-Leu) degron at the C-terminus, leading to its degradation.

The protein resides in the cytoplasm. The protein localises to the P-body. It localises to the cytoplasmic ribonucleoprotein granule. It is found in the stress granule. Its subcellular location is the nucleus. The catalysed reaction is ATP + H2O = ADP + phosphate + H(+). Its function is as follows. 5' to 3' RNA helicase that is involved in a number of cellular roles ranging from mRNA metabolism and translation, modulation of viral infectivity, inhibition of retrotransposition, or regulation of synaptic transmission. Plays an important role in innate antiviral immunity by promoting type I interferon production. Mechanistically, specifically uses IKKepsilon/IKBKE as the mediator kinase for IRF3 activation. Contributes to UPF1 mRNA target degradation by translocation along 3' UTRs. Required for microRNA (miRNA)-mediated gene silencing by the RNA-induced silencing complex (RISC). Required for both miRNA-mediated translational repression and miRNA-mediated cleavage of complementary mRNAs by RISC. In cooperation with FMR1, regulates miRNA-mediated translational repression by AGO2. Restricts retrotransposition of long interspersed element-1 (LINE-1) in cooperation with TUT4 and TUT7 counteracting the RNA chaperonne activity of L1RE1. Facilitates LINE-1 uridylation by TUT4 and TUT7. Required for embryonic viability and for normal central nervous system development and function. Plays two critical roles in early brain development: suppresses retroelements in the nucleus by directly inhibiting cDNA synthesis, while regulates cytoskeletal mRNAs to influence neurite outgrowth in the cytosol. May function as a messenger ribonucleoprotein (mRNP) clearance factor. This is Putative helicase MOV-10 (MOV10) from Bos taurus (Bovine).